A 198-amino-acid chain; its full sequence is CASP-like protein 4B3 (198 aa).

The interval 1–27 (MSSSGPPAGDGRDDASGPGPAGAAAAA) is disordered. Residues 1–51 (MSSSGPPAGDGRDDASGPGPAGAAAAADGSVPVSRSIVERWKMEPAAARAR) lie on the Cytoplasmic side of the membrane. The span at 16–27 (SGPGPAGAAAAA) shows a compositional bias: low complexity. A helical transmembrane segment spans residues 52 to 72 (LLLRAVAWLFSLLALVVMASN). The Extracellular segment spans residues 73–85 (KHGHGGAQDFDNY). The chain crosses the membrane as a helical span at residues 86–106 (PEYTYCLGISIIAVLYTTAQV). The Cytoplasmic segment spans residues 107–124 (TRDVHRLSWGRDVIAGRK). The chain crosses the membrane as a helical span at residues 125–145 (AAAVVDFAGDQVVAYLLMSAL). At 146–166 (SAAAPVTDYMRQAADNLFTDS) the chain is on the extracellular side. Residues 167 to 187 (AAAAISMAFLAFLAAGLSALV) form a helical membrane-spanning segment. The Cytoplasmic segment spans residues 188-198 (SGYNLAMEVLV).

Belongs to the Casparian strip membrane proteins (CASP) family. In terms of assembly, homodimer and heterodimers.

The protein localises to the cell membrane. This Oryza sativa subsp. japonica (Rice) protein is CASP-like protein 4B3.